The sequence spans 408 residues: MKKAAIITIGSELLEGLILNKNAQFLCQELKNLGYRVVKVSTVGDDLISISEEVKTLLLKVDLLILTGGLGPTQDDLTRDAVAKVLNRSLKLNEELLSKIKEKIKKYHSEIPQNIERQALVIDGAEVLDNPVGSAPGQLLTVDGKIVILLPGPPRELIPMFNALKDRLRTPDALYQVVLKYYSIPEAVLEDLLKDILYSQNIVEVATMADHVEGVRLRLTTHMKNKEYLDEMVKKILDKTGEHLYGVNDEKMEEVVVRLLKDRKKTLAVAESCTGGMLSSLVVNVPGASEVFIGGVVAYSNDLKKHILGVREDTLKKHGAVSEECVQEMTEGLKKLTGADICVSISGIAGPSGGTPEKPVGTVFIDIFEHEHITMRYNFTGDRNMIRTRSAMMALENLRKYLKGRERV.

The protein belongs to the CinA family.

This Thermotoga maritima (strain ATCC 43589 / DSM 3109 / JCM 10099 / NBRC 100826 / MSB8) protein is CinA-like protein.